Consider the following 170-residue polypeptide: Thialysine N-epsilon-acetyltransferase (170 aa).

The 163-residue stretch at 4–166 (VLIREAKEGD…FRFEGEAMRE (163 aa)) folds into the N-acetyltransferase domain. 27–28 (YE) is a binding site for substrate. Residue lysine 29 is modified to N6-acetyllysine. Substrate is bound at residue glutamate 92. Residues 94–96 (IYV), 102–107 (GQGIGS), 133–135 (NKK), and tyrosine 140 contribute to the acetyl-CoA site. The active-site Proton donor is the tyrosine 140. Glutamate 152 provides a ligand contact to substrate.

It belongs to the acetyltransferase family. In terms of assembly, homodimer.

The protein localises to the cytoplasm. The enzyme catalyses S-(2-aminoethyl)-L-cysteine + acetyl-CoA = S-(2-acetamidoethyl)-L-cysteine + CoA + H(+). It carries out the reaction an alkane-alpha,omega-diamine + acetyl-CoA = an N-acetylalkane-alpha,omega-diamine + CoA + H(+). In terms of biological role, catalyzes the N-acetylation of the amino acid thialysine (S-(2-aminoethyl)-L-cysteine), a L-lysine analog with the 4-methylene group substituted with a sulfur. May also catalyze acetylation of polyamines, such as norspermidine, spermidine or spermine. However, ability to acetylate polyamines is weak, suggesting that it does not act as a diamine acetyltransferase in vivo. This chain is Thialysine N-epsilon-acetyltransferase, found in Sus scrofa (Pig).